Consider the following 322-residue polypeptide: uncharacterized protein (322 aa).

5 helical membrane passes run Gly159 to Leu179, Met203 to Leu223, Gly234 to Leu254, Phe267 to Tyr287, and Thr296 to Trp316.

The protein resides in the membrane. This is an uncharacterized protein from Dictyostelium discoideum (Social amoeba).